Here is a 227-residue protein sequence, read N- to C-terminus: DNA utilization protein YhgH (227 aa).

The protein belongs to the ComF/GntX family.

Required for the use of extracellular DNA as a nutrient. Has been suggested to be involved in gluconate metabolism. This Escherichia coli (strain K12) protein is DNA utilization protein YhgH.